Consider the following 218-residue polypeptide: Pyridoxine/pyridoxamine 5'-phosphate oxidase (218 aa).

Substrate is bound by residues 12-15 (RLAY) and arginine 70. Residues 65 to 70 (RTVLLR), 80 to 81 (YT), lysine 87, and glutamine 109 contribute to the FMN site. Substrate is bound by residues tyrosine 127, arginine 131, and serine 135. FMN contacts are provided by residues 145 to 146 (QS) and tryptophan 191. Substrate is bound at residue 197 to 199 (RLH). Arginine 201 lines the FMN pocket.

It belongs to the pyridoxamine 5'-phosphate oxidase family. As to quaternary structure, homodimer. FMN is required as a cofactor.

It carries out the reaction pyridoxamine 5'-phosphate + O2 + H2O = pyridoxal 5'-phosphate + H2O2 + NH4(+). The enzyme catalyses pyridoxine 5'-phosphate + O2 = pyridoxal 5'-phosphate + H2O2. It participates in cofactor metabolism; pyridoxal 5'-phosphate salvage; pyridoxal 5'-phosphate from pyridoxamine 5'-phosphate: step 1/1. It functions in the pathway cofactor metabolism; pyridoxal 5'-phosphate salvage; pyridoxal 5'-phosphate from pyridoxine 5'-phosphate: step 1/1. Functionally, catalyzes the oxidation of either pyridoxine 5'-phosphate (PNP) or pyridoxamine 5'-phosphate (PMP) into pyridoxal 5'-phosphate (PLP). This chain is Pyridoxine/pyridoxamine 5'-phosphate oxidase, found in Deinococcus geothermalis (strain DSM 11300 / CIP 105573 / AG-3a).